The following is a 255-amino-acid chain: Bouquet formation protein 3 (255 aa).

The next 8 membrane-spanning stretches (helical) occupy residues 13–33 (IKVS…NYHL), 48–68 (IPYW…LLLQ), 72–94 (LGYG…YYLT), 99–116 (IAWA…ARCF), 132–152 (YSVS…LNYI), 172–192 (SLVA…GYVI), 205–225 (SLFL…SILF), and 235–255 (VVGA…ALSL).

It localises to the endoplasmic reticulum membrane. The protein localises to the nucleus inner membrane. In terms of biological role, connects telomeres to the nuclear envelop (NE) during both vegetative growth and meiosis. This connection ensures clustering of telomeres to the spindle pole body (SPB) when cells enter meiotic prophase. This is Bouquet formation protein 3 (bqt3) from Schizosaccharomyces pombe (strain 972 / ATCC 24843) (Fission yeast).